A 730-amino-acid chain; its full sequence is Zinc finger protein 615 (730 aa).

The region spanning 7 to 78 (LTLEDVAVDF…EDEIYSRICF (72 aa)) is the KRAB domain. 19 consecutive C2H2-type zinc fingers follow at residues 203–225 (HVCS…QRVH), 231–253 (HVCS…QRTH), 259–281 (YECT…QKTH), 287–309 (YTCS…QRTH), 315–337 (HGCS…QKTH), 343–365 (YICS…HRTH), 371–393 (FICN…QQTH), 399–421 (YTCS…QRTH), 427–449 (YKCN…QRTH), 455–477 (YVCT…QRTH), 483–505 (YICN…QRTH), 511–533 (YVCG…QRTH), 539–561 (YICD…RRTH), 567–589 (YVCS…QRTH), 595–617 (YICN…QQTH), 623–645 (YKCN…QRFH), 651–673 (FACT…QRIH), 679–701 (YKCS…QRKH), and 707–729 (YGCS…KRIH).

It belongs to the krueppel C2H2-type zinc-finger protein family.

Its subcellular location is the nucleus. May be involved in transcriptional regulation. The chain is Zinc finger protein 615 (ZNF615) from Pongo abelii (Sumatran orangutan).